The chain runs to 203 residues: Guanylate kinase (203 aa).

Positions 3–181 (GTLYIVAAPS…AVSEMCAIFT (179 aa)) constitute a Guanylate kinase-like domain. ATP is bound at residue 10-17 (APSGAGKS).

Belongs to the guanylate kinase family.

The protein resides in the cytoplasm. The catalysed reaction is GMP + ATP = GDP + ADP. In terms of biological role, essential for recycling GMP and indirectly, cGMP. The sequence is that of Guanylate kinase from Xanthomonas campestris pv. campestris (strain 8004).